A 177-amino-acid chain; its full sequence is Neuroblastoma suppressor of tumorigenicity 1 (177 aa).

Positions 1 to 16 (MLWFVVGALFPALLLA) are cleaved as a signal peptide. Disulfide bonds link Cys34–Cys84, Cys48–Cys98, Cys58–Cys117, Cys62–Cys119, and Cys81–Cys122. The region spanning 34 to 123 (CEAKNITQIV…ILHCSCQACG (90 aa)) is the CTCK domain. Residues 143–177 (MPAEGPGPHHYAHHQQEVEEPPASSHHHHEEEGDE) are disordered.

This sequence belongs to the DAN family.

The protein resides in the secreted. Functionally, may act as a tumor suppressor. The protein is Neuroblastoma suppressor of tumorigenicity 1 (NBL1) of Gallus gallus (Chicken).